A 177-amino-acid chain; its full sequence is ADP-ribosylation factor-like protein 3 (177 aa).

The N-myristoyl glycine moiety is linked to residue G2. GTP-binding positions include 23–31, 125–128, and A159; these read GLDNAGKTT and NKQD.

The protein belongs to the small GTPase superfamily. Arf family.

The protein resides in the golgi apparatus membrane. It localises to the cytoplasm. The protein localises to the cytoskeleton. It is found in the spindle. Its subcellular location is the nucleus. The protein resides in the microtubule organizing center. In terms of biological role, small GTP-binding protein which cycles between an inactive GDP-bound and an active GTP-bound form, and the rate of cycling is regulated by guanine nucleotide exchange factors (GEF) and GTPase-activating proteins (GAP). Required for normal cytokinesis and cilia signaling. Required for targeting proteins to the ciliary membrane by releasing myristoylated protein from unc119 cargo adapters into the cilium. This Chlamydomonas reinhardtii (Chlamydomonas smithii) protein is ADP-ribosylation factor-like protein 3.